We begin with the raw amino-acid sequence, 377 residues long: MQQRVIVGMSGGVDSSVSAALLLQQGYQVEGLFMKNWEEDDGTEYCTAMEDLADAQAVADKIGIKLHTANFAMEYWDRVFEHFLAEYAAGRTPNPDILCNKEIKFRAFLDHAMTLGADFIATGHYARRAETAYNSKGEAYAPLLRGLDNNKDQTYFLHAVHGREINKTLFPVGEIEKPEVRRIAEELDLATAKKKDSTGICFIGERRFNDFLKQYLPAQPGKIVLDNGKEVGEHHGLMYYTLGQRGGIGLGGMKGASEGAWFVLHKDVANNRLVVGQGHDHPLMQSTQLWSEAIDWVAGEQNIPAEGLRCTAKTRYRQPDQACTVFIDENSEHGVRVEFDEPQRAVTPGQSVVFYSDEVCLGGGVIHHTNAPTPNFI.

Residues 8 to 15 and methionine 34 each bind ATP; that span reads GMSGGVDS. The tract at residues 94 to 96 is interaction with target base in tRNA; that stretch reads NPD. The active-site Nucleophile is cysteine 99. Cysteine 99 and cysteine 201 are disulfide-bonded. Glycine 123 serves as a coordination point for ATP. Positions 151–153 are interaction with tRNA; the sequence is KDQ. Residue cysteine 201 is the Cysteine persulfide intermediate of the active site. The interaction with tRNA stretch occupies residues 315–316; the sequence is RY.

This sequence belongs to the MnmA/TRMU family.

It is found in the cytoplasm. It catalyses the reaction S-sulfanyl-L-cysteinyl-[protein] + uridine(34) in tRNA + AH2 + ATP = 2-thiouridine(34) in tRNA + L-cysteinyl-[protein] + A + AMP + diphosphate + H(+). In terms of biological role, catalyzes the 2-thiolation of uridine at the wobble position (U34) of tRNA, leading to the formation of s(2)U34. The chain is tRNA-specific 2-thiouridylase MnmA from Acinetobacter baumannii (strain AB307-0294).